Here is a 95-residue protein sequence, read N- to C-terminus: Small ribosomal subunit protein bS18 (95 aa).

This sequence belongs to the bacterial ribosomal protein bS18 family. Part of the 30S ribosomal subunit. Forms a tight heterodimer with protein bS6.

Binds as a heterodimer with protein bS6 to the central domain of the 16S rRNA, where it helps stabilize the platform of the 30S subunit. The chain is Small ribosomal subunit protein bS18 from Rickettsia rickettsii (strain Sheila Smith).